Here is a 753-residue protein sequence, read N- to C-terminus: Photosystem I P700 chlorophyll a apoprotein A1 (753 aa).

The next 8 helical transmembrane spans lie at 73 to 96 (IFSA…YHGA), 159 to 182 (LYCT…FHYH), 198 to 222 (LNHH…HVSL), 294 to 312 (TAHH…GHMY), 349 to 372 (WHAQ…HHMY), 388 to 414 (LSLF…IFMV), 436 to 458 (AIVS…LYIH), and 534 to 552 (FLVH…LILL). 2 residues coordinate [4Fe-4S] cluster: Cys576 and Cys585. Transmembrane regions (helical) follow at residues 592–613 (HVFL…HFSW) and 667–689 (LSAY…MFLF). His678 contacts chlorophyll a'. Chlorophyll a-binding residues include Met686 and Tyr694. Trp695 serves as a coordination point for phylloquinone. The chain crosses the membrane as a helical span at residues 727–747 (AVGVAHYLLGGIVTTWAFFLA).

This sequence belongs to the PsaA/PsaB family. In terms of assembly, the PsaA/B heterodimer binds the P700 chlorophyll special pair and subsequent electron acceptors. PSI consists of a core antenna complex that captures photons, and an electron transfer chain that converts photonic excitation into a charge separation. The eukaryotic PSI reaction center is composed of at least 11 subunits. It depends on P700 is a chlorophyll a/chlorophyll a' dimer, A0 is one or more chlorophyll a, A1 is one or both phylloquinones and FX is a shared 4Fe-4S iron-sulfur center. as a cofactor.

It is found in the plastid. Its subcellular location is the chloroplast thylakoid membrane. The catalysed reaction is reduced [plastocyanin] + hnu + oxidized [2Fe-2S]-[ferredoxin] = oxidized [plastocyanin] + reduced [2Fe-2S]-[ferredoxin]. PsaA and PsaB bind P700, the primary electron donor of photosystem I (PSI), as well as the electron acceptors A0, A1 and FX. PSI is a plastocyanin-ferredoxin oxidoreductase, converting photonic excitation into a charge separation, which transfers an electron from the donor P700 chlorophyll pair to the spectroscopically characterized acceptors A0, A1, FX, FA and FB in turn. Oxidized P700 is reduced on the lumenal side of the thylakoid membrane by plastocyanin. The polypeptide is Photosystem I P700 chlorophyll a apoprotein A1 (Pinus thunbergii (Japanese black pine)).